Consider the following 190-residue polypeptide: MAIILGIDPGSRVTGYGVIRQAGRHLEYLGSGVIRTSVTDLPTRLKRIYMGVNEIILQYQPDMFAIEEVFLAKNANSALKLGQARGAAIVAAVNHDLPVFEYAARLVKQTVVGIGSADKIQVQDMVTRILTLSEKPQADAADALAIAITHAHSLQHAFHVTNSAQATEKPEKTTALLKARYSRGRFRLKI.

Residues Asp8, Glu67, and Asp139 contribute to the active site. Positions 8, 67, and 139 each coordinate Mg(2+).

This sequence belongs to the RuvC family. As to quaternary structure, homodimer which binds Holliday junction (HJ) DNA. The HJ becomes 2-fold symmetrical on binding to RuvC with unstacked arms; it has a different conformation from HJ DNA in complex with RuvA. In the full resolvosome a probable DNA-RuvA(4)-RuvB(12)-RuvC(2) complex forms which resolves the HJ. The cofactor is Mg(2+).

The protein resides in the cytoplasm. It carries out the reaction Endonucleolytic cleavage at a junction such as a reciprocal single-stranded crossover between two homologous DNA duplexes (Holliday junction).. The RuvA-RuvB-RuvC complex processes Holliday junction (HJ) DNA during genetic recombination and DNA repair. Endonuclease that resolves HJ intermediates. Cleaves cruciform DNA by making single-stranded nicks across the HJ at symmetrical positions within the homologous arms, yielding a 5'-phosphate and a 3'-hydroxyl group; requires a central core of homology in the junction. The consensus cleavage sequence is 5'-(A/T)TT(C/G)-3'. Cleavage occurs on the 3'-side of the TT dinucleotide at the point of strand exchange. HJ branch migration catalyzed by RuvA-RuvB allows RuvC to scan DNA until it finds its consensus sequence, where it cleaves and resolves the cruciform DNA. In Pasteurella multocida (strain Pm70), this protein is Crossover junction endodeoxyribonuclease RuvC.